Reading from the N-terminus, the 298-residue chain is 3'-5' exonuclease crn-4 (298 aa).

The region spanning 12–192 (LILDFETTSD…DDCLNIATIL (181 aa)) is the Exonuclease domain. Mg(2+) contacts are provided by aspartate 15, glutamate 17, and aspartate 184. Positions 210, 260, 263, and 270 each coordinate Zn(2+).

In terms of assembly, homodimer (via C-terminus). Interacts with crn-5; interaction promotes the DNase activity of crn-4. Interacts with cps-6, crn-1 and cyn-13. Requires Mg(2+) as cofactor.

Exonuclease activity is inhibited in vitro by pontacyl violet 6R (PV6R), p-chloromercuriphenyl sulfonate (PCMPS), 5,5'-dithiobis(2-nitrobenzoic acid) (DTNB), aurintricarboxylic acid (ATA), 2-morpholin-4-ylethanesulfonate (MES), 4-[(4,6-dichloro-1,3,5-triazin-2-yl)amino]-2-(3-hydroxy-6-oxoxanthen-9-yl)benzoic acid (DR396) and fmoc-d-Cha-OH (FDCO). Interaction with ssRNA is reduced in vitro by PV6R. Its function is as follows. Possesses 3'-&gt;5' exoribonuclease activity in digestion of DNA and RNA. Cleaves nucleic acid substrates with efficiencies in the following order: single-stranded RNA (ssRNA) &gt; double-stranded DNA (dsDNA) &gt; single-stranded DNA (ssDNA). Involved in apoptotic DNA degradation. In Caenorhabditis elegans, this protein is 3'-5' exonuclease crn-4 (crn-4).